The primary structure comprises 551 residues: Tetrachloroethene reductive dehalogenase (551 aa).

The segment at residues 1 to 39 is a signal peptide (tat-type signal); it reads MGEINRRNFLKASMLGAAAAAVASASAVKGMVSPLVADA. Residues 411–440 enclose the 4Fe-4S ferredoxin-type 1 domain; that stretch reads PRKFGVREFCRLCKKCADACPAQAISHEKD. 8 residues coordinate [4Fe-4S] cluster: Cys-420, Cys-423, Cys-426, Cys-430, Cys-467, Cys-478, Cys-481, and Cys-485. A 4Fe-4S ferredoxin-type 2 domain is found at 478–496; sequence CANCVAVCSWNKVETWNHD.

Belongs to the PceA family. Monomer. The cofactor is [4Fe-4S] cluster. Corrinoid serves as cofactor. In terms of processing, predicted to be exported by the Tat system. The position of the signal peptide cleavage has been experimentally proven.

The protein localises to the cell membrane. It carries out the reaction trichloroethene + chloride + A + H(+) = tetrachloroethene + AH2. The enzyme catalyses trichloroethene + AH2 = (Z)-1,2-dichloroethene + chloride + A + H(+). Activity is inhibited by ammonium ions. Photoreversibly inactivated by 1-iodopropane. Functionally, catalyzes the reductive dechlorination of tetrachloroethene (PCE) to trichloroethene (TCE) and of trichloroethene to cis-1,2-dichloroethene (DCE). Can also use trichlorofluoroethene, tetrachloromethane, hexachloroethane, tetrachloroethane, trichloroethane and 1,1,1-trichloro-2,2,2-trifluoroethane. Menaquinone can act as the electron donor. Reduced methyl viologen can act as the artificial electron donor. This Dehalobacter restrictus (strain DSM 9455 / PER-K23) protein is Tetrachloroethene reductive dehalogenase.